The chain runs to 908 residues: Low affinity vacuolar monovalent cation/H(+) antiporter (908 aa).

Positions M1–S15 are enriched in polar residues. The segment at M1–L20 is disordered. Over M1–W244 the chain is Cytoplasmic. T26 is modified (phosphothreonine). Residue S32 is modified to Phosphoserine. Residue T33 is modified to Phosphothreonine. Residues N68–R147 form a disordered region. The segment covering S73–T87 has biased composition (low complexity). Polar residues predominate over residues E102–S121. S110 carries the phosphoserine modification. Residue T118 is modified to Phosphothreonine. S121 is subject to Phosphoserine. Residues F245–L265 form a helical membrane-spanning segment. Over L266–H408 the chain is Vacuolar. A glycan (N-linked (GlcNAc...) asparagine) is linked at N361. Residues L409–I429 form a helical membrane-spanning segment. At P430 to T494 the chain is on the cytoplasmic side. Residues N495–L515 traverse the membrane as a helical segment. The Vacuolar portion of the chain corresponds to K516–S530. Residues I531–A551 traverse the membrane as a helical segment. Topologically, residues S552–G560 are cytoplasmic. The helical transmembrane segment at V561–A581 threads the bilayer. Residues L582–G587 lie on the Vacuolar side of the membrane. Residues L588 to L608 form a helical membrane-spanning segment. The Cytoplasmic portion of the chain corresponds to S609 to S626. Residues A627–L647 traverse the membrane as a helical segment. Topologically, residues Y648–P686 are vacuolar. A helical membrane pass occupies residues M687–L707. At R708 to T746 the chain is on the cytoplasmic side. A helical membrane pass occupies residues C747–V767. Topologically, residues D768–G783 are vacuolar. Residues L784–I804 traverse the membrane as a helical segment. Topologically, residues H805 to S816 are cytoplasmic. Residues A817 to Y837 form a helical membrane-spanning segment. The Vacuolar segment spans residues T838–Q851. A helical transmembrane segment spans residues M852 to F872. Over T873–K885 the chain is Cytoplasmic. A helical transmembrane segment spans residues G886 to L906. The Vacuolar segment spans residues S907–E908.

It belongs to the Ca(2+):cation antiporter (CaCA) (TC 2.A.19) family.

The protein localises to the vacuole membrane. In terms of biological role, has a role in promoting intracellular monovalent cation sequestration via the exchange of monovalent cations and especially Na(+) for hydrogen ions across the vacuolar membrane. This chain is Low affinity vacuolar monovalent cation/H(+) antiporter (VNX1), found in Saccharomyces cerevisiae (strain ATCC 204508 / S288c) (Baker's yeast).